A 397-amino-acid chain; its full sequence is Tryptophan synthase beta chain (397 aa).

Residue K87 is modified to N6-(pyridoxal phosphate)lysine.

This sequence belongs to the TrpB family. Tetramer of two alpha and two beta chains. Pyridoxal 5'-phosphate is required as a cofactor.

The enzyme catalyses (1S,2R)-1-C-(indol-3-yl)glycerol 3-phosphate + L-serine = D-glyceraldehyde 3-phosphate + L-tryptophan + H2O. It participates in amino-acid biosynthesis; L-tryptophan biosynthesis; L-tryptophan from chorismate: step 5/5. The beta subunit is responsible for the synthesis of L-tryptophan from indole and L-serine. This chain is Tryptophan synthase beta chain, found in Escherichia coli O17:K52:H18 (strain UMN026 / ExPEC).